The primary structure comprises 341 residues: HTH-type transcriptional repressor PurR (341 aa).

The 55-residue stretch at 2-56 folds into the HTH lacI-type domain; sequence ATIKDVAKRANVSTTTVSHVINKTRFVAEETRNAVWAAIKELHYSPSAVARSLKV. A DNA-binding region (H-T-H motif) is located at residues 4–23; it reads IKDVAKRANVSTTTVSHVIN. The DNA-binding element occupies 48–56; it reads SAVARSLKV. Hypoxanthine-binding residues include tyrosine 73, arginine 190, threonine 192, phenylalanine 221, and aspartate 275.

In terms of assembly, homodimer.

The protein operates within purine metabolism; purine nucleotide biosynthesis [regulation]. In terms of biological role, is the main repressor of the genes involved in the de novo synthesis of purine nucleotides, regulating purB, purC, purEK, purF, purHD, purL, purMN and guaBA expression. PurR is allosterically activated to bind its cognate DNA by binding the purine corepressors, hypoxanthine or guanine, thereby effecting transcription repression. In Klebsiella pneumoniae subsp. pneumoniae (strain ATCC 700721 / MGH 78578), this protein is HTH-type transcriptional repressor PurR.